The primary structure comprises 504 residues: L-arabinose isomerase (504 aa).

4 residues coordinate Mn(2+): Glu-308, Glu-335, His-352, and His-452.

This sequence belongs to the arabinose isomerase family. It depends on Mn(2+) as a cofactor.

It catalyses the reaction beta-L-arabinopyranose = L-ribulose. The protein operates within carbohydrate degradation; L-arabinose degradation via L-ribulose; D-xylulose 5-phosphate from L-arabinose (bacterial route): step 1/3. Functionally, catalyzes the conversion of L-arabinose to L-ribulose. This chain is L-arabinose isomerase, found in Bifidobacterium adolescentis (strain ATCC 15703 / DSM 20083 / NCTC 11814 / E194a).